The sequence spans 180 residues: Translation initiation factor IF-3 (180 aa).

The protein belongs to the IF-3 family. As to quaternary structure, monomer.

It localises to the cytoplasm. IF-3 binds to the 30S ribosomal subunit and shifts the equilibrium between 70S ribosomes and their 50S and 30S subunits in favor of the free subunits, thus enhancing the availability of 30S subunits on which protein synthesis initiation begins. The chain is Translation initiation factor IF-3 from Xylella fastidiosa (strain 9a5c).